A 127-amino-acid chain; its full sequence is Large ribosomal subunit protein eL18 (127 aa).

Belongs to the eukaryotic ribosomal protein eL18 family.

The protein is Large ribosomal subunit protein eL18 of Methanopyrus kandleri (strain AV19 / DSM 6324 / JCM 9639 / NBRC 100938).